Consider the following 102-residue polypeptide: Thioredoxin (102 aa).

The Thioredoxin domain maps to 1–102 (MVKVVSAENF…SLIRLINQHS (102 aa)). Residues Cys-28 and Cys-31 are joined by a disulfide bond.

This sequence belongs to the thioredoxin family.

Functionally, participates in various redox reactions through the reversible oxidation of its active center dithiol to a disulfide and catalyzes dithiol-disulfide exchange reactions. This is Thioredoxin (trxA) from Chlamydia caviae (strain ATCC VR-813 / DSM 19441 / 03DC25 / GPIC) (Chlamydophila caviae).